Consider the following 312-residue polypeptide: Glyoxylate/hydroxypyruvate reductase A (312 aa).

The active site involves R227. The active-site Proton donor is the H275.

Belongs to the D-isomer specific 2-hydroxyacid dehydrogenase family. GhrA subfamily.

It is found in the cytoplasm. It catalyses the reaction glycolate + NADP(+) = glyoxylate + NADPH + H(+). The enzyme catalyses (R)-glycerate + NAD(+) = 3-hydroxypyruvate + NADH + H(+). It carries out the reaction (R)-glycerate + NADP(+) = 3-hydroxypyruvate + NADPH + H(+). In terms of biological role, catalyzes the NADPH-dependent reduction of glyoxylate and hydroxypyruvate into glycolate and glycerate, respectively. The sequence is that of Glyoxylate/hydroxypyruvate reductase A from Salmonella paratyphi C (strain RKS4594).